The following is a 363-amino-acid chain: Flagellar P-ring protein (363 aa).

Residues 1 to 20 form the signal peptide; the sequence is MKKLTLVLFGMLFLASSAHA.

The protein belongs to the FlgI family. The basal body constitutes a major portion of the flagellar organelle and consists of four rings (L,P,S, and M) mounted on a central rod.

It localises to the periplasm. The protein localises to the bacterial flagellum basal body. Its function is as follows. Assembles around the rod to form the L-ring and probably protects the motor/basal body from shearing forces during rotation. This chain is Flagellar P-ring protein, found in Vibrio atlanticus (strain LGP32) (Vibrio splendidus (strain Mel32)).